A 372-amino-acid chain; its full sequence is Glutamate 5-kinase (372 aa).

K14 is a binding site for ATP. Residues S54, D141, and N153 each coordinate substrate. 173–174 (TD) is an ATP binding site. The PUA domain maps to 280 to 358 (RGRVVIDAGA…SEIESVLGHL (79 aa)).

The protein belongs to the glutamate 5-kinase family.

The protein resides in the cytoplasm. The catalysed reaction is L-glutamate + ATP = L-glutamyl 5-phosphate + ADP. The protein operates within amino-acid biosynthesis; L-proline biosynthesis; L-glutamate 5-semialdehyde from L-glutamate: step 1/2. In terms of biological role, catalyzes the transfer of a phosphate group to glutamate to form L-glutamate 5-phosphate. This chain is Glutamate 5-kinase, found in Cupriavidus pinatubonensis (strain JMP 134 / LMG 1197) (Cupriavidus necator (strain JMP 134)).